The following is a 79-amino-acid chain: UPF0349 protein BCE_5075 (79 aa).

Belongs to the UPF0349 family.

The protein is UPF0349 protein BCE_5075 of Bacillus cereus (strain ATCC 10987 / NRS 248).